Reading from the N-terminus, the 381-residue chain is Succinyl-diaminopimelate desuccinylase (381 aa).

Zn(2+) is bound at residue H72. D74 is an active-site residue. D105 provides a ligand contact to Zn(2+). E139 (proton acceptor) is an active-site residue. E140, E168, and H354 together coordinate Zn(2+).

This sequence belongs to the peptidase M20A family. DapE subfamily. Homodimer. Requires Zn(2+) as cofactor. Co(2+) serves as cofactor.

The catalysed reaction is N-succinyl-(2S,6S)-2,6-diaminopimelate + H2O = (2S,6S)-2,6-diaminopimelate + succinate. It functions in the pathway amino-acid biosynthesis; L-lysine biosynthesis via DAP pathway; LL-2,6-diaminopimelate from (S)-tetrahydrodipicolinate (succinylase route): step 3/3. Catalyzes the hydrolysis of N-succinyl-L,L-diaminopimelic acid (SDAP), forming succinate and LL-2,6-diaminopimelate (DAP), an intermediate involved in the bacterial biosynthesis of lysine and meso-diaminopimelic acid, an essential component of bacterial cell walls. The chain is Succinyl-diaminopimelate desuccinylase from Shewanella sp. (strain MR-7).